The chain runs to 124 residues: Putative C(50) carotenoid beta-cyclase subunit A (124 aa).

3 helical membrane passes run 1–21 (MIGL…LVID), 34–54 (AAAL…VLGV), and 78–98 (FEEV…AAGV).

The protein belongs to the lycopene beta-cyclase family. As to quaternary structure, may form a complex with LbtBC.

The protein localises to the cell membrane. It functions in the pathway carotenoid biosynthesis. Functionally, involved in the biosynthesis of C(50) beta-cyclic carotenoids. May have C(50) carotenoid beta-cyclase activity and produce the C(50) beta-cyclic carotenoid C.p.450 from the C(50) carotenoid dihydrobisanhydrobacterioruberin (DH-BABR). The polypeptide is Putative C(50) carotenoid beta-cyclase subunit A (Dietzia sp. (strain CQ4)).